Consider the following 479-residue polypeptide: Aspartyl/glutamyl-tRNA(Asn/Gln) amidotransferase subunit B (479 aa).

Belongs to the GatB/GatE family. GatB subfamily. In terms of assembly, heterotrimer of A, B and C subunits.

The catalysed reaction is L-glutamyl-tRNA(Gln) + L-glutamine + ATP + H2O = L-glutaminyl-tRNA(Gln) + L-glutamate + ADP + phosphate + H(+). The enzyme catalyses L-aspartyl-tRNA(Asn) + L-glutamine + ATP + H2O = L-asparaginyl-tRNA(Asn) + L-glutamate + ADP + phosphate + 2 H(+). Functionally, allows the formation of correctly charged Asn-tRNA(Asn) or Gln-tRNA(Gln) through the transamidation of misacylated Asp-tRNA(Asn) or Glu-tRNA(Gln) in organisms which lack either or both of asparaginyl-tRNA or glutaminyl-tRNA synthetases. The reaction takes place in the presence of glutamine and ATP through an activated phospho-Asp-tRNA(Asn) or phospho-Glu-tRNA(Gln). This chain is Aspartyl/glutamyl-tRNA(Asn/Gln) amidotransferase subunit B, found in Geobacter sp. (strain M21).